Here is a 237-residue protein sequence, read N- to C-terminus: Ribosomal RNA small subunit methyltransferase G (237 aa).

S-adenosyl-L-methionine contacts are provided by residues Gly78, Phe83, 129-130, and Arg148; that span reads AE. Residues 216–237 are disordered; the sequence is SKKKETPNKYPRKAGTPNKKPL.

It belongs to the methyltransferase superfamily. RNA methyltransferase RsmG family.

It localises to the cytoplasm. In terms of biological role, specifically methylates the N7 position of a guanine in 16S rRNA. This is Ribosomal RNA small subunit methyltransferase G from Streptococcus agalactiae serotype III (strain NEM316).